Consider the following 82-residue polypeptide: Large ribosomal subunit protein bL31B (82 aa).

The protein belongs to the bacterial ribosomal protein bL31 family. Type B subfamily. Part of the 50S ribosomal subunit after the end of exponential growth.

Functionally, while neither of the L31 paralogs is essential, this protein does not seem to function as the main L31 protein. Has a higher affinity for 70S ribosomes than the zinc-containing L31 paralog; is able to displace it to varying extents, even under zinc-replete conditions. This is Large ribosomal subunit protein bL31B (rpmE2) from Bacillus subtilis (strain 168).